Here is a 349-residue protein sequence, read N- to C-terminus: Polyamine aminopropyltransferase 2 (349 aa).

Positions 29 to 267 constitute a PABS domain; that stretch reads DGAITAIEDS…SSWGFLLASD (239 aa). Gln60 serves as a coordination point for S-methyl-5'-thioadenosine. His91 and Glu115 together coordinate spermidine. Residues Asp135 and 167–168 contribute to the S-methyl-5'-thioadenosine site; that span reads DG. Residue Asp185 is the Proton acceptor of the active site. Pro194 is a binding site for S-methyl-5'-thioadenosine.

This sequence belongs to the spermidine/spermine synthase family. As to quaternary structure, homodimer or homotetramer.

The protein localises to the cytoplasm. It catalyses the reaction S-adenosyl 3-(methylsulfanyl)propylamine + putrescine = S-methyl-5'-thioadenosine + spermidine + H(+). It functions in the pathway amine and polyamine biosynthesis; spermidine biosynthesis; spermidine from putrescine: step 1/1. Catalyzes the irreversible transfer of a propylamine group from the amino donor S-adenosylmethioninamine (decarboxy-AdoMet) to putrescine (1,4-diaminobutane) to yield spermidine. This chain is Polyamine aminopropyltransferase 2, found in Pseudomonas aeruginosa (strain ATCC 15692 / DSM 22644 / CIP 104116 / JCM 14847 / LMG 12228 / 1C / PRS 101 / PAO1).